We begin with the raw amino-acid sequence, 467 residues long: MTRGAWMCRQYDDGLKIWLAAPRENEKPFIDSERAQKWRLSLASLLFFTVLLSDHLWFCAEAKLTRTRDKEHHQQQQQQQQQQQQQQQQQQQQQQRQQQRQRQQQRQRQQEPSWPALLASMGESSPAAQAHRLLSASSSPTLPPSPGGGGGSKGNRGKNNRSRALFLGNSAKPVWRLETCYPQGASSGQCFTVESADAVCARNWSRGAAAGEEQSSRGSRPTPLWNLSDFYLSFCNSYTLWELFSGLSSPSTLNCSLDVVLTEGGEMTTCRQCIEAYQDYDHHAQEKYEEFESVLHKYLQSDEYSVKSCPEDCKIVYKAWLCSQYFEVTQFNCRKTIPCKQYCLEVQTRCPFILPDNDEVIYGGLSSFICTGLYETFLTNDEPECCDIRSEEQTAPRPKGTVDRRDSCPRTSLTVSSATRLCPGRLKLCVLVLILLHTVLTASAAQNSTGLGLGGLPTLEDNSTRED.

Residues 40 to 60 (LSLASLLFFTVLLSDHLWFCA) form a helical membrane-spanning segment. A disordered region spans residues 121–161 (MGESSPAAQAHRLLSASSSPTLPPSPGGGGGSKGNRGKNNR). 3 N-linked (GlcNAc...) asparagine glycosylation sites follow: asparagine 160, asparagine 226, and asparagine 254. 7 disulfides stabilise this stretch: cysteine 200/cysteine 270, cysteine 235/cysteine 322, cysteine 255/cysteine 270, cysteine 313/cysteine 350, cysteine 333/cysteine 386, cysteine 339/cysteine 385, and cysteine 343/cysteine 370. Residues 390–408 (SEEQTAPRPKGTVDRRDSC) show a composition bias toward basic and acidic residues. The segment at 390-409 (SEEQTAPRPKGTVDRRDSCP) is disordered. The helical transmembrane segment at 426–446 (LKLCVLVLILLHTVLTASAAQ) threads the bilayer. N-linked (GlcNAc...) asparagine glycosylation occurs at asparagine 462.

It belongs to the NALF family. As to quaternary structure, component of the NALCN channel complex. NALCN complex consists of NALCN and auxiliary subunits, UNC79, UNC80 and NACL1. These auxiliary subunits are essential for the NALCN channel function.

Its subcellular location is the cell membrane. Functionally, auxillary component of the NALCN sodium channel complex, a channel that regulates the resting membrane potential and controls neuronal excitability. This is NALCN channel auxiliary factor 1 from Mus musculus (Mouse).